Here is a 199-residue protein sequence, read N- to C-terminus: Translation machinery-associated protein 22 (199 aa).

The SUI1 domain maps to 97-168 (VVIRREARTK…EVEAYIHALL (72 aa)).

This sequence belongs to the DENR family. Interacts with the 40S ribosomal subunit.

Its subcellular location is the cytoplasm. This Eremothecium gossypii (strain ATCC 10895 / CBS 109.51 / FGSC 9923 / NRRL Y-1056) (Yeast) protein is Translation machinery-associated protein 22 (TMA22).